An 827-amino-acid polypeptide reads, in one-letter code: MEPDSKKVKLDIFNFPTTRETRTPEEVAESYAEAVKSHPFYDNVHSVVDFYDSGTIKDGRGQIIGVVLREALPKYAASMASELLTSAAVRTSLRSMMFGGEPPLSGIAGYFDYRGSPVELKSRKTSFTYEHEAAWPAVFPVVDYVSEIYRHVAPERWKAQNDAIPDLVRIHGTPFSTLTINSRFRTASHTDVGDFDAGYSCIACLDGQFKGLALSFDDFGINVLLQPRDVMIFDSHHFHSNTEVELSFSGEDWKRLTCVFYYRAALGEPASYAEYQRRLEKSKTDTRFTPVVHHVRVKENGTSVNRPSPVYPISQSPFWVPMVAHCLQHCASAAQCVHEAMTADGSRLAEMMFGESLSTSDGIPLRGEDEKVKANGDSTPRPLSRLGGFSETNLMVSTAVEKKKYLDSEFLLHCISAQLLDMWKQARARWLELVGKEWAHMLALNPERKDFLWKNQSEMNSAFFDLCEVGKQVMLGLLGKEVALPKEEQAFWIMYAVHLSAACAEELHMPEVAMSLRKLNVKLKDFNFGGTRYFKDMPPEEKKRRMERKQRIEEARRHGMPSGSHEKRANWLTNDSFDYQTEDCVIDYAQHKWVLPALHAKEVTKTVRTGELPTTERVVRVLVVIPDPQSKLENVDCKLEVPDMVGSSSEWERLMSSPAVHRVLSAAQRNLQLPDSVTHGNVQTHFAFHSTLPTDIYDFVVLQHVLSRIPDDAQASAYIRRAAALCSGCLFVVETDVQCRQYYTLKYSIRCSYDTVAPLFFQQLHRVCYGTKTARVRTKGELESLIPTVCCARYKLQGSPLNTTVHVVSPFPSCEVQNLSSALCDRA.

Positions 62–264 (QIIGVVLREA…RLTCVFYYRA (203 aa)) are thymine dioxygenase. Fe cation contacts are provided by His-189, Asp-191, and His-239. Position 255 (Arg-255) interacts with 2-oxoglutarate. 2 disordered regions span residues 364–383 (PLRG…PRPL) and 539–568 (PEEK…HEKR). The segment at 392-561 (TNLMVSTAVE…IEEARRHGMP (170 aa)) is DNA-binding JBP1 domain. The segment covering 539-557 (PEEKKRRMERKQRIEEARR) has biased composition (basic and acidic residues).

It belongs to the TET family. JBP1 subfamily. In terms of assembly, monomer. Binds to DNA as a monomer. The cofactor is Fe(2+).

The protein resides in the nucleus. The enzyme catalyses thymine + 2-oxoglutarate + O2 = 5-hydroxymethyluracil + succinate + CO2. Its function is as follows. Dioxygenase that catalyzes the first step of DNA base J (beta-d-glucosyl-HOMedU) biosynthesis by converting thymine to 5-hydroxymethyluracil (HOMedU). DNA base J is a hypermodified thymidine residue found in the genome of kinetoplastid parasites, which is localized primarily to repetitive DNA, namely the telomeres, and is implicated in the regulation of antigenic variation. Also specifically binds to base J-containing DNA (J-DNA). Involved in propagation and maintenance of DNA base J synthesis initiated by JBP2 by specifically binding already synthesized DNA base J and propagating J synthesis. Thymine dioxygenase activity and J-DNA-binding are independent functions. The chain is Thymine dioxygenase JBP1 (JBP1) from Leishmania tarentolae (Sauroleishmania tarentolae).